We begin with the raw amino-acid sequence, 285 residues long: 2-dehydro-3-deoxyphosphooctonate aldolase (285 aa).

Belongs to the KdsA family.

It localises to the cytoplasm. The catalysed reaction is D-arabinose 5-phosphate + phosphoenolpyruvate + H2O = 3-deoxy-alpha-D-manno-2-octulosonate-8-phosphate + phosphate. The protein operates within carbohydrate biosynthesis; 3-deoxy-D-manno-octulosonate biosynthesis; 3-deoxy-D-manno-octulosonate from D-ribulose 5-phosphate: step 2/3. Its pathway is bacterial outer membrane biogenesis; lipopolysaccharide biosynthesis. In Albidiferax ferrireducens (strain ATCC BAA-621 / DSM 15236 / T118) (Rhodoferax ferrireducens), this protein is 2-dehydro-3-deoxyphosphooctonate aldolase.